A 128-amino-acid polypeptide reads, in one-letter code: Ribonuclease P protein component (128 aa).

This sequence belongs to the RnpA family. Consists of a catalytic RNA component (M1 or rnpB) and a protein subunit.

It carries out the reaction Endonucleolytic cleavage of RNA, removing 5'-extranucleotides from tRNA precursor.. RNaseP catalyzes the removal of the 5'-leader sequence from pre-tRNA to produce the mature 5'-terminus. It can also cleave other RNA substrates such as 4.5S RNA. The protein component plays an auxiliary but essential role in vivo by binding to the 5'-leader sequence and broadening the substrate specificity of the ribozyme. The protein is Ribonuclease P protein component of Prochlorococcus marinus (strain MIT 9312).